The chain runs to 297 residues: 4-diphosphocytidyl-2-C-methyl-D-erythritol kinase (297 aa).

Lysine 10 is an active-site residue. 95 to 105 (PVAGGMAGGSA) provides a ligand contact to ATP. Aspartate 137 is an active-site residue.

This sequence belongs to the GHMP kinase family. IspE subfamily.

It catalyses the reaction 4-CDP-2-C-methyl-D-erythritol + ATP = 4-CDP-2-C-methyl-D-erythritol 2-phosphate + ADP + H(+). It participates in isoprenoid biosynthesis; isopentenyl diphosphate biosynthesis via DXP pathway; isopentenyl diphosphate from 1-deoxy-D-xylulose 5-phosphate: step 3/6. Its function is as follows. Catalyzes the phosphorylation of the position 2 hydroxy group of 4-diphosphocytidyl-2C-methyl-D-erythritol. In Streptomyces avermitilis (strain ATCC 31267 / DSM 46492 / JCM 5070 / NBRC 14893 / NCIMB 12804 / NRRL 8165 / MA-4680), this protein is 4-diphosphocytidyl-2-C-methyl-D-erythritol kinase.